The following is a 601-amino-acid chain: Elongation factor 4 (601 aa).

A tr-type G domain is found at 7–189 (SLIRNFSIIA…ALVTRLPPPV (183 aa)). Residues 19–24 (DHGKST) and 136–139 (NKVD) each bind GTP.

It belongs to the TRAFAC class translation factor GTPase superfamily. Classic translation factor GTPase family. LepA subfamily.

It localises to the cell inner membrane. It carries out the reaction GTP + H2O = GDP + phosphate + H(+). In terms of biological role, required for accurate and efficient protein synthesis under certain stress conditions. May act as a fidelity factor of the translation reaction, by catalyzing a one-codon backward translocation of tRNAs on improperly translocated ribosomes. Back-translocation proceeds from a post-translocation (POST) complex to a pre-translocation (PRE) complex, thus giving elongation factor G a second chance to translocate the tRNAs correctly. Binds to ribosomes in a GTP-dependent manner. In Gluconacetobacter diazotrophicus (strain ATCC 49037 / DSM 5601 / CCUG 37298 / CIP 103539 / LMG 7603 / PAl5), this protein is Elongation factor 4.